A 335-amino-acid polypeptide reads, in one-letter code: Anthranilate phosphoribosyltransferase (335 aa).

5-phospho-alpha-D-ribose 1-diphosphate-binding positions include glycine 79, 82 to 83, serine 87, 89 to 92, 107 to 115, and serine 119; these read GD, NIST, and KHGNRSITS. Glycine 79 is a binding site for anthranilate. Residue serine 91 participates in Mg(2+) binding. Asparagine 110 contributes to the anthranilate binding site. An anthranilate-binding site is contributed by arginine 165. The Mg(2+) site is built by aspartate 224 and glutamate 225.

This sequence belongs to the anthranilate phosphoribosyltransferase family. Homodimer. It depends on Mg(2+) as a cofactor.

The enzyme catalyses N-(5-phospho-beta-D-ribosyl)anthranilate + diphosphate = 5-phospho-alpha-D-ribose 1-diphosphate + anthranilate. Its pathway is amino-acid biosynthesis; L-tryptophan biosynthesis; L-tryptophan from chorismate: step 2/5. Functionally, catalyzes the transfer of the phosphoribosyl group of 5-phosphorylribose-1-pyrophosphate (PRPP) to anthranilate to yield N-(5'-phosphoribosyl)-anthranilate (PRA). The sequence is that of Anthranilate phosphoribosyltransferase from Lactococcus lactis subsp. cremoris (strain MG1363).